Reading from the N-terminus, the 156-residue chain is SsrA-binding protein (156 aa).

The protein belongs to the SmpB family.

Its subcellular location is the cytoplasm. In terms of biological role, required for rescue of stalled ribosomes mediated by trans-translation. Binds to transfer-messenger RNA (tmRNA), required for stable association of tmRNA with ribosomes. tmRNA and SmpB together mimic tRNA shape, replacing the anticodon stem-loop with SmpB. tmRNA is encoded by the ssrA gene; the 2 termini fold to resemble tRNA(Ala) and it encodes a 'tag peptide', a short internal open reading frame. During trans-translation Ala-aminoacylated tmRNA acts like a tRNA, entering the A-site of stalled ribosomes, displacing the stalled mRNA. The ribosome then switches to translate the ORF on the tmRNA; the nascent peptide is terminated with the 'tag peptide' encoded by the tmRNA and targeted for degradation. The ribosome is freed to recommence translation, which seems to be the essential function of trans-translation. The chain is SsrA-binding protein from Renibacterium salmoninarum (strain ATCC 33209 / DSM 20767 / JCM 11484 / NBRC 15589 / NCIMB 2235).